We begin with the raw amino-acid sequence, 346 residues long: fMet-Leu-Phe receptor (346 aa).

Asn1 and Asn7 each carry an N-linked (GlcNAc...) asparagine glycan. Topologically, residues Asn1 to Ile24 are extracellular. Residues Ile25–Val47 form a helical membrane-spanning segment. Residues Ala48–Thr58 are Cytoplasmic-facing. The chain crosses the membrane as a helical span at residues Ile59–Val80. Residues Arg81–Phe97 lie on the Extracellular side of the membrane. Residues Cys95 and Cys173 are joined by a disulfide bond. The helical transmembrane segment at Ile98–Leu118 threads the bilayer. At Asp119–Ser137 the chain is on the cytoplasmic side. The chain crosses the membrane as a helical span at residues Leu138–Ile159. Over Arg160–Arg202 the chain is Extracellular. A helical membrane pass occupies residues Phe203 to Thr223. The Cytoplasmic portion of the chain corresponds to Lys224 to Val239. A helical transmembrane segment spans residues Leu240 to Val263. Residues Arg264–Val282 lie on the Extracellular side of the membrane. Residues Thr283–Gly302 traverse the membrane as a helical segment. At Gln303–Ala346 the chain is on the cytoplasmic side. The segment covering Ala324–Pro338 has biased composition (polar residues). Residues Ala324–Ala346 are disordered.

The protein belongs to the G-protein coupled receptor 1 family. Post-translationally, phosphorylated; which is necessary for desensitization.

It is found in the cell membrane. High affinity receptor for N-formyl-methionyl peptides (fMLP), which are powerful neutrophil chemotactic factors. Binding of fMLP to the receptor stimulates intracellular calcium mobilization and superoxide anion release. This response is mediated via a G-protein that activates a phosphatidylinositol-calcium second messenger system. Receptor for TAFA4, mediates its effects on chemoattracting macrophages, promoting phagocytosis and increasing ROS release. Receptor for cathepsin CTSG, leading to increased phagocyte chemotaxis. This is fMet-Leu-Phe receptor (FPR1) from Pongo pygmaeus (Bornean orangutan).